The following is a 406-amino-acid chain: Multifunctional CCA protein (406 aa).

Positions 8 and 11 each coordinate ATP. CTP contacts are provided by Gly-8 and Arg-11. Mg(2+) contacts are provided by Asp-21 and Asp-23. Arg-91, Arg-137, and Arg-140 together coordinate ATP. CTP is bound by residues Arg-91, Arg-137, and Arg-140. Residues 228–329 enclose the HD domain; sequence TGIHTLMVAQ…IKILNKFDVW (102 aa).

The protein belongs to the tRNA nucleotidyltransferase/poly(A) polymerase family. Bacterial CCA-adding enzyme type 1 subfamily. In terms of assembly, monomer. Can also form homodimers and oligomers. The cofactor is Mg(2+). Requires Ni(2+) as cofactor.

It carries out the reaction a tRNA precursor + 2 CTP + ATP = a tRNA with a 3' CCA end + 3 diphosphate. It catalyses the reaction a tRNA with a 3' CCA end + 2 CTP + ATP = a tRNA with a 3' CCACCA end + 3 diphosphate. Catalyzes the addition and repair of the essential 3'-terminal CCA sequence in tRNAs without using a nucleic acid template. Adds these three nucleotides in the order of C, C, and A to the tRNA nucleotide-73, using CTP and ATP as substrates and producing inorganic pyrophosphate. tRNA 3'-terminal CCA addition is required both for tRNA processing and repair. Also involved in tRNA surveillance by mediating tandem CCA addition to generate a CCACCA at the 3' terminus of unstable tRNAs. While stable tRNAs receive only 3'-terminal CCA, unstable tRNAs are marked with CCACCA and rapidly degraded. The sequence is that of Multifunctional CCA protein from Vibrio campbellii (strain ATCC BAA-1116).